Here is a 569-residue protein sequence, read N- to C-terminus: Potassium-transporting ATPase potassium-binding subunit (569 aa).

10 consecutive transmembrane segments (helical) span residues 3–23 (LMEY…SPVL), 68–88 (AASL…VLML), 136–156 (VGLA…AVAV), 179–199 (VLYV…GQGV), 259–279 (LQML…GGAV), 284–304 (HAWT…CSLY), 384–404 (GLYG…LMVG), 422–442 (AMLA…VAAV), 490–510 (IALA…GVAG), and 534–554 (LLLT…ALAL).

It belongs to the KdpA family. In terms of assembly, the system is composed of three essential subunits: KdpA, KdpB and KdpC.

The protein resides in the cell inner membrane. Functionally, part of the high-affinity ATP-driven potassium transport (or Kdp) system, which catalyzes the hydrolysis of ATP coupled with the electrogenic transport of potassium into the cytoplasm. This subunit binds the periplasmic potassium ions and delivers the ions to the membrane domain of KdpB through an intramembrane tunnel. This Nitratidesulfovibrio vulgaris (strain ATCC 29579 / DSM 644 / CCUG 34227 / NCIMB 8303 / VKM B-1760 / Hildenborough) (Desulfovibrio vulgaris) protein is Potassium-transporting ATPase potassium-binding subunit.